A 671-amino-acid chain; its full sequence is DNA ligase (671 aa).

NAD(+)-binding positions include 38 to 42 (DKEFD), 87 to 88 (SL), and Glu-113. Lys-115 acts as the N6-AMP-lysine intermediate in catalysis. NAD(+) contacts are provided by Arg-136, Glu-170, Lys-282, and Lys-306. 4 residues coordinate Zn(2+): Cys-396, Cys-399, Cys-414, and Cys-419. The 86-residue stretch at 586 to 671 (SDLQPFVGQS…LLKQEGIAID (86 aa)) folds into the BRCT domain.

Belongs to the NAD-dependent DNA ligase family. LigA subfamily. Requires Mg(2+) as cofactor. Mn(2+) serves as cofactor.

The catalysed reaction is NAD(+) + (deoxyribonucleotide)n-3'-hydroxyl + 5'-phospho-(deoxyribonucleotide)m = (deoxyribonucleotide)n+m + AMP + beta-nicotinamide D-nucleotide.. DNA ligase that catalyzes the formation of phosphodiester linkages between 5'-phosphoryl and 3'-hydroxyl groups in double-stranded DNA using NAD as a coenzyme and as the energy source for the reaction. It is essential for DNA replication and repair of damaged DNA. This Leptospira biflexa serovar Patoc (strain Patoc 1 / Ames) protein is DNA ligase.